The primary structure comprises 169 residues: Cell division protein B3 (169 aa).

Functionally, part of a cell division machinery. May fulfill a coordination function between the Cdv proteins during cell division. In Sulfolobus acidocaldarius (strain ATCC 33909 / DSM 639 / JCM 8929 / NBRC 15157 / NCIMB 11770), this protein is Cell division protein B3.